We begin with the raw amino-acid sequence, 796 residues long: Phenylalanine--tRNA ligase beta subunit (796 aa).

In terms of domain architecture, tRNA-binding spans 39–149 (SAALKSFRVA…GDAPLGTTFA (111 aa)). The region spanning 398–470 (LARKALAYDP…RVHGLDAVPS (73 aa)) is the B5 domain. 4 residues coordinate Mg(2+): D448, D454, E457, and E458. The region spanning 703-795 (PALQAVTRDF…AAGKLGAELR (93 aa)) is the FDX-ACB domain.

It belongs to the phenylalanyl-tRNA synthetase beta subunit family. Type 1 subfamily. In terms of assembly, tetramer of two alpha and two beta subunits. Mg(2+) serves as cofactor.

It localises to the cytoplasm. It carries out the reaction tRNA(Phe) + L-phenylalanine + ATP = L-phenylalanyl-tRNA(Phe) + AMP + diphosphate + H(+). In Novosphingobium aromaticivorans (strain ATCC 700278 / DSM 12444 / CCUG 56034 / CIP 105152 / NBRC 16084 / F199), this protein is Phenylalanine--tRNA ligase beta subunit.